We begin with the raw amino-acid sequence, 96 residues long: UPF0235 protein YggU (96 aa).

This sequence belongs to the UPF0235 family.

The polypeptide is UPF0235 protein YggU (Salmonella arizonae (strain ATCC BAA-731 / CDC346-86 / RSK2980)).